The primary structure comprises 68 residues: Beta-defensin 1 (68 aa).

The signal sequence occupies residues 1 to 21 (MRTSYLLLFILCLVLCDMDSG). Residues 22–32 (DTFLTGLGHRS) constitute a propeptide that is removed on maturation. Cystine bridges form between C37-C66, C44-C59, and C49-C67.

Belongs to the beta-defensin family. In terms of assembly, monomer. Homodimer.

The protein resides in the secreted. Its subcellular location is the membrane. Its function is as follows. Has bactericidal activity. May act as a ligand for C-C chemokine receptor CCR6. Positively regulates the sperm motility and bactericidal activity in a CCR6-dependent manner. Binds to CCR6 and triggers Ca2+ mobilization in the sperm which is important for its motility. The sequence is that of Beta-defensin 1 (DEFB1) from Saguinus oedipus (Cotton-top tamarin).